The chain runs to 352 residues: D-alanine--D-alanine ligase (352 aa).

The ATP-grasp domain maps to 135-344 (KTVFAKAGLP…FPQLVDRLIE (210 aa)). An ATP-binding site is contributed by 171–226 (EETLNYPCFVKPANLGSSVGIAKVRSRSELEKALDQAASYDRRIIVEAGVIAREVE). 3 residues coordinate Mg(2+): Asp297, Glu311, and Asn313.

The protein belongs to the D-alanine--D-alanine ligase family. It depends on Mg(2+) as a cofactor. Mn(2+) serves as cofactor.

The protein resides in the cytoplasm. The catalysed reaction is 2 D-alanine + ATP = D-alanyl-D-alanine + ADP + phosphate + H(+). It participates in cell wall biogenesis; peptidoglycan biosynthesis. In terms of biological role, cell wall formation. This Gloeothece citriformis (strain PCC 7424) (Cyanothece sp. (strain PCC 7424)) protein is D-alanine--D-alanine ligase.